The sequence spans 783 residues: MDFSIEEYDLTFDFDLSEFTYRGKEKIKLSGEANELVLDSVRLSIDSVKLNGSAVDFDVNDKALRIESRIKSGDVVDIDFHAKVSDTLMGLYLSKTREGTMITTQFESTGARMAFPCIDHPAYKAVFSITLVIDKDYDAISNMPVKKVETSDRKIVEFEKTPRMSTYLLYIGVGKFKYASERYKDREIILASLKDIKSKYPIDIAKRSIEFYEGYFGIPYALPKMHLISVPEFGAGAMENWGAITFREIALMATEDSGSLMKQNAAITIAHEIAHQWFGDLVTMKWWNDLWLNESFATFMSYKTVDSFSKQWDVFSDFIKSETGGALRSDSLKNTHPIEVDVKDPDEISQIFDEISYGKGASILRMIEDYVGAEDFRKGISKYLKEHAYGNAEGSDLWNAIETESGKPVNRIMEAWITKAGYPVLKVNKDGNRIRLTQEQFYLDGTSGNTEWPIPLTIITKKGKVSMLMEDEVYIDEMLKLNANNSGFYRVMYDNDTFNTVISSLDKFSNLDKWGLLNDMYAFLVSGRLSVNEYVERIKNFLNDEDHLVVEEIASQLTSLYLIKPSSQVVYQLAKDYLRNQVQRLGTKKKGEDDKISKLRGIVYQDLVTVDEDFAKELSPQFASLSEDPDLALAKAVAKARTDGLNELIDAANKYTDDEIRVRVIAAMGWCSKDQLSTIFSLIDNGTIKKQDMLYVFSFVVTNPSGRDFFFQNIDKIVSLMEHAFEGTGYTSRILEGSIPYIGLEKYEEIKAKASQIRSPSYNVGIDKGLETLEIIRKLYNKL.

Residues Glu107 and 236–240 each bind substrate; that span reads GAMEN. His271 lines the Zn(2+) pocket. The active-site Proton acceptor is Glu272. Zn(2+) is bound by residues His275 and Glu294.

The protein belongs to the peptidase M1 family. Monomer. Part of the Tricorn proteolytic complex. Zn(2+) serves as cofactor.

It localises to the cytoplasm. Proteases F1, F2 and F3 degrade oligopeptides produced by Tricorn (themselves probably produced by the proteasome), yielding free amino acids. This is Tricorn protease-interacting factor F2 (trf2) from Thermoplasma volcanium (strain ATCC 51530 / DSM 4299 / JCM 9571 / NBRC 15438 / GSS1).